The sequence spans 294 residues: Elongation factor Ts (294 aa).

An involved in Mg(2+) ion dislocation from EF-Tu region spans residues 81 to 84; that stretch reads TDFV.

This sequence belongs to the EF-Ts family.

Its subcellular location is the cytoplasm. In terms of biological role, associates with the EF-Tu.GDP complex and induces the exchange of GDP to GTP. It remains bound to the aminoacyl-tRNA.EF-Tu.GTP complex up to the GTP hydrolysis stage on the ribosome. The sequence is that of Elongation factor Ts from Hydrogenovibrio crunogenus (strain DSM 25203 / XCL-2) (Thiomicrospira crunogena).